We begin with the raw amino-acid sequence, 83 residues long: MKTLLLTLVVVTIVCLDLGYTMTCYNQQSSQAKTTTTCSGGVSSCYRKTWSDIRGTIIERGCGCPSVKKGIERICCGTDKCNN.

The signal sequence occupies residues 1–21 (MKTLLLTLVVVTIVCLDLGYT). Intrachain disulfides connect C24–C45, C38–C62, C64–C75, and C76–C81.

The protein belongs to the three-finger toxin family. Short-chain subfamily. Type I alpha-neurotoxin sub-subfamily. In terms of tissue distribution, expressed by the venom gland.

It localises to the secreted. In terms of biological role, binds to muscle nicotinic acetylcholine receptor (nAChR) and inhibit acetylcholine from binding to the receptor, thereby impairing neuromuscular transmission. The polypeptide is Short neurotoxin 3FTx-Oxy3 (Oxyuranus microlepidotus (Inland taipan)).